A 474-amino-acid polypeptide reads, in one-letter code: PTS system N-acetylmuramic acid-specific EIIBC component (474 aa).

The PTS EIIB type-1 domain occupies 1-89 (MAKEISSELL…SELLGEAPVQ (89 aa)). Over 1-123 (MAKEISSELL…LAKFATIFTP (123 aa)) the chain is Cytoplasmic. The Phosphocysteine intermediate; for EIIB activity role is filled by Cys29. The 360-residue stretch at 115-474 (AKFATIFTPL…LFGCRNVNLD (360 aa)) folds into the PTS EIIC type-1 domain. The helical transmembrane segment at 124 to 144 (LIPGFIAAGLLLGIATLIATV) threads the bilayer. The Periplasmic segment spans residues 145–157 (MHVPADAQGTLPD). A helical membrane pass occupies residues 158–178 (ALNFMKVFSKGLFTFLVILVG). At 179–180 (YN) the chain is on the cytoplasmic side. Residues 181 to 201 (AAQAFGGTGVNGAIIAALFLL) form a helical membrane-spanning segment. The Periplasmic segment spans residues 202 to 217 (GYNPAATTGYYAGFHD). A helical membrane pass occupies residues 218–238 (FFGLPIDPRGNIIGVLIAAWA). The Cytoplasmic segment spans residues 239–260 (CARIEGMVRRFMPDDLDMLLTS). A helical membrane pass occupies residues 261 to 281 (LITLLITATLAYLIIMPLGGW). The Periplasmic segment spans residues 282–301 (LFEGMSWLFMHLNSNPFGCA). A helical transmembrane segment spans residues 302–322 (VLAGLFLIAVVFGVHQGFIPV). The Cytoplasmic segment spans residues 323–334 (YLALMDSQGFNS). The helical transmembrane segment at 335-355 (LFPILSMAGAGQVGAALALYW) threads the bilayer. At 356–368 (RAQPHSALRSQVR) the chain is on the periplasmic side. A helical transmembrane segment spans residues 369–389 (GAIIPGLLGVGEPLIYGVTLP). Topologically, residues 390 to 393 (RMKP) are cytoplasmic. Residues 394–414 (FVTACLGGAAGGLFIGLIAWW) traverse the membrane as a helical segment. The Periplasmic portion of the chain corresponds to 415-440 (GLPMGLNSAFGPSGLVALPLMTSAQG). A helical membrane pass occupies residues 441–461 (ILPAMAVYAGGILVAWVCGFI). The Cytoplasmic segment spans residues 462–474 (FTTLFGCRNVNLD).

It is found in the cell inner membrane. The enzyme catalyses N-acetyl-beta-D-muramate(out) + N(pros)-phospho-L-histidyl-[protein] = N-acetyl-beta-D-muramate 6-phosphate(in) + L-histidyl-[protein]. In terms of biological role, the phosphoenolpyruvate-dependent sugar phosphotransferase system (sugar PTS), a major carbohydrate active transport system, catalyzes the phosphorylation of incoming sugar substrates concomitantly with their translocation across the cell membrane. This system is involved in N-acetylmuramic acid (MurNAc) transport, yielding cytoplasmic MurNAc-6-P. Is responsible for growth on MurNAc as the sole source of carbon and energy. Is also able to take up anhydro-N-acetylmuramic acid (anhMurNAc), but cannot phosphorylate the carbon 6, probably because of the 1,6-anhydro ring. This chain is PTS system N-acetylmuramic acid-specific EIIBC component (murP), found in Escherichia coli (strain K12).